The primary structure comprises 156 residues: Large ribosomal subunit protein eL24 (156 aa).

Positions 87-156 (LELIKERRSQ…AFQKVHATSR (70 aa)) are disordered. Positions 89-129 (LIKERRSQKPSDRKAARDVKLAKDKEAKKADKAARKAEKAK) are enriched in basic and acidic residues. Residues 130-147 (SAAAGAQSKVSKQQSKGA) show a composition bias toward low complexity.

It belongs to the eukaryotic ribosomal protein eL24 family.

The sequence is that of Large ribosomal subunit protein eL24 (RPL24) from Debaryomyces hansenii (strain ATCC 36239 / CBS 767 / BCRC 21394 / JCM 1990 / NBRC 0083 / IGC 2968) (Yeast).